A 259-amino-acid chain; its full sequence is Caffeoyl-CoA O-methyltransferase 1 (259 aa).

Over residues 1-14 (MATTTTEATKTSST) the composition is skewed to low complexity. A disordered region spans residues 1 to 29 (MATTTTEATKTSSTNGEDQKQSQNLRHQE). Ala2 bears the N-acetylalanine mark. Lys33 contributes to the substrate binding site. S-adenosyl-L-methionine is bound by residues Thr75, Glu97, 99 to 100 (GV), Ser105, Asp123, and Ala152. Residue Asp175 coordinates substrate. Asp175 provides a ligand contact to a divalent metal cation. Position 177 (Asp177) interacts with S-adenosyl-L-methionine. A divalent metal cation is bound by residues Asp201 and Asn202. Asn206 is a binding site for substrate.

Belongs to the class I-like SAM-binding methyltransferase superfamily. Cation-dependent O-methyltransferase family. CCoAMT subfamily. A divalent metal cation is required as a cofactor. In terms of tissue distribution, expressed in stems and roots. Detected in leaves, siliques, flower buds, flowers. Expressed in the tapetum, but not in the endothecium. Detected in the vascular system of leaves and all flower organs, including stigma, stamens, petals and sepals.

It carries out the reaction (E)-caffeoyl-CoA + S-adenosyl-L-methionine = (E)-feruloyl-CoA + S-adenosyl-L-homocysteine + H(+). It participates in aromatic compound metabolism; phenylpropanoid biosynthesis. Functionally, methylates caffeoyl-CoA to feruloyl-CoA. Has a very low activity with caffeic acid and esculetin. Involved in scopoletin biosynthesis in roots. The sequence is that of Caffeoyl-CoA O-methyltransferase 1 (CCOAOMT1) from Arabidopsis thaliana (Mouse-ear cress).